Here is a 212-residue protein sequence, read N- to C-terminus: Transmembrane emp24 domain-containing protein p24delta4 (212 aa).

The signal sequence occupies residues 1-25; sequence MKKKMIPTTILLSALIFSLSPICEA. The Lumenal segment spans residues 26–179; it reads VWLTVPHTGS…RIVSEKTNSR (154 aa). The region spanning 35 to 147 is the GOLD domain; sequence SKCVSEEIQS…IEGVELEFKK (113 aa). N-linked (GlcNAc...) asparagine glycosylation occurs at N82. The stretch at 133–155 forms a coiled coil; sequence ARKEKIEGVELEFKKLEGAVEAI. 2 positions are modified to omega-N-methylated arginine: R165 and R170. The chain crosses the membrane as a helical span at residues 180–200; it reads VAWYSIMSLGICIVVSGLQIL. Residues 201–212 are Cytoplasmic-facing; sequence YLKQYFEKKKLI. Residues 205-206 carry the COPII vesicle coat-binding motif; sequence YF. Positions 205 to 212 match the COPI vesicle coat-binding motif; it reads YFEKKKLI.

The protein belongs to the EMP24/GP25L family. In terms of assembly, probably oligomerizes with other members of the EMP24/GP25L family. Associates with the COPI vesicle coat (coatomer). Associates with the COPII vesicle coat (coatomer).

Its subcellular location is the endoplasmic reticulum membrane. It is found in the golgi apparatus membrane. Its function is as follows. Involved in vesicular protein trafficking. Mainly functions in the early secretory pathway. Required for trafficking GLL23, a component of the PYK10 complex. May act as a receptor facilitating its packing into COPII carriers and export from the endoplasmic reticulum. This is Transmembrane emp24 domain-containing protein p24delta4 (CYB) from Arabidopsis thaliana (Mouse-ear cress).